The chain runs to 156 residues: Endoribonuclease YbeY (156 aa).

3 residues coordinate Zn(2+): His122, His126, and His132.

It belongs to the endoribonuclease YbeY family. The cofactor is Zn(2+).

Its subcellular location is the cytoplasm. Its function is as follows. Single strand-specific metallo-endoribonuclease involved in late-stage 70S ribosome quality control and in maturation of the 3' terminus of the 16S rRNA. The chain is Endoribonuclease YbeY from Moorella thermoacetica (strain ATCC 39073 / JCM 9320).